A 43-amino-acid polypeptide reads, in one-letter code: METATLVAISISGSLVSFTGYALYTAFGQPSQQLRDPFEEHGD.

The helical transmembrane segment at 5–27 threads the bilayer; that stretch reads TLVAISISGSLVSFTGYALYTAF.

This sequence belongs to the PsbN family.

The protein resides in the plastid. Its subcellular location is the chloroplast thylakoid membrane. Functionally, may play a role in photosystem I and II biogenesis. This is Protein PsbN from Drimys granadensis.